We begin with the raw amino-acid sequence, 103 residues long: Defensin-like protein 289 (103 aa).

The N-terminal stretch at 1 to 29 is a signal peptide; it reads MATLKTTIFIIFILYISCTMFVNIFRVQA. 6 disulfide bridges follow: cysteine 33–cysteine 50, cysteine 39–cysteine 55, cysteine 43–cysteine 57, cysteine 72–cysteine 92, cysteine 78–cysteine 98, and cysteine 84–cysteine 100.

Belongs to the DEFL family.

The protein resides in the secreted. The protein is Defensin-like protein 289 of Arabidopsis thaliana (Mouse-ear cress).